We begin with the raw amino-acid sequence, 489 residues long: Cytochrome P450 302a1, mitochondrial (489 aa).

Position 434 (cysteine 434) interacts with heme.

It belongs to the cytochrome P450 family. Requires heme as cofactor. As to expression, complex coexpression pattern of dib (disembodied) and sad (shade) in the early embryo that restricts to the prothoracic gland cells of the developing ring gland during late embryogenesis. In larvae and adult, coexpression is seen in prothoracic gland and follicle cells of the ovary. In adults, coexpression is seen in the follicle cells.

The protein resides in the mitochondrion membrane. The catalysed reaction is 2,22-dideoxyecdysone + 2 reduced [adrenodoxin] + O2 + 2 H(+) = 2-deoxyecdysone + 2 oxidized [adrenodoxin] + H2O. It functions in the pathway steroid biosynthesis; ecdysteroid biosynthesis. Functionally, required for CNS development; negatively regulates glial cell division in the embryonic midline. Involved in the metabolism of insect hormones; responsible for ecdysteroid C22-hydroxylase activity. May be involved in the breakdown of synthetic insecticides. The chain is Cytochrome P450 302a1, mitochondrial from Drosophila melanogaster (Fruit fly).